The following is a 310-amino-acid chain: Ribosomal RNA small subunit methyltransferase H (310 aa).

Residues 32-34 (GGH), aspartate 52, phenylalanine 79, aspartate 100, and glutamine 107 each bind S-adenosyl-L-methionine.

This sequence belongs to the methyltransferase superfamily. RsmH family.

The protein resides in the cytoplasm. It catalyses the reaction cytidine(1402) in 16S rRNA + S-adenosyl-L-methionine = N(4)-methylcytidine(1402) in 16S rRNA + S-adenosyl-L-homocysteine + H(+). Its function is as follows. Specifically methylates the N4 position of cytidine in position 1402 (C1402) of 16S rRNA. This Geobacillus thermodenitrificans (strain NG80-2) protein is Ribosomal RNA small subunit methyltransferase H.